Consider the following 413-residue polypeptide: NADH-quinone oxidoreductase subunit D (413 aa).

Belongs to the complex I 49 kDa subunit family. NDH-1 is composed of 14 different subunits. Subunits NuoB, C, D, E, F, and G constitute the peripheral sector of the complex.

It is found in the cell inner membrane. The catalysed reaction is a quinone + NADH + 5 H(+)(in) = a quinol + NAD(+) + 4 H(+)(out). NDH-1 shuttles electrons from NADH, via FMN and iron-sulfur (Fe-S) centers, to quinones in the respiratory chain. The immediate electron acceptor for the enzyme in this species is believed to be ubiquinone. Couples the redox reaction to proton translocation (for every two electrons transferred, four hydrogen ions are translocated across the cytoplasmic membrane), and thus conserves the redox energy in a proton gradient. In Rhodobacter capsulatus (Rhodopseudomonas capsulata), this protein is NADH-quinone oxidoreductase subunit D.